The sequence spans 326 residues: Protein MICROTUBULE BINDING PROTEIN 2C (326 aa).

Composition is skewed to polar residues over residues 1-15 and 34-46; these read MYEQ…QSDS and PHQS…SGNE. Disordered stretches follow at residues 1 to 46 and 71 to 132; these read MYEQ…SGNE and ERSS…KALA. Residues 132–183 are a coiled coil; that stretch reads AGAEKEEMSRLREQVNDLQTKLSEKEEVLKSMEMSKNQVNEIQEKLEATNRL.

It belongs to the microtubule binding protein 2C family. As to quaternary structure, interacts with STM. In terms of tissue distribution, expressed in seedlings, roots, flowers and developing ovules.

The protein localises to the cytoplasm. It localises to the cytoskeleton. In terms of biological role, prevents homeodomain proteins (e.g. STM) association to plasmodesmata and, consequently, cell-to-cell transport. Binds to RNA. Alters STM RNA binding capacity. Regulates cytoskeleton (e.g. actin) organization that determinates cell shape. Regulates stomata patterning and drought tolerance. Involved in restricting tobamovirus (e.g. oilseed rape mosaic virus) infectivity, probably by interfering with cell-to-cell virus movement. The polypeptide is Protein MICROTUBULE BINDING PROTEIN 2C (Arabidopsis thaliana (Mouse-ear cress)).